The primary structure comprises 244 residues: RNA transcription, translation and transport factor protein (244 aa).

3 positions are modified to N6-acetyllysine: Lys20, Lys62, and Lys98.

It belongs to the RTRAF family. Homodimer. Interacts with FAM98A (via N- and C-terminus). Interacts with NIN; which may prevent phosphorylation of NIN. Interacts with POLR2A. Component of a tRNA-splicing ligase complex with FAM98B, DDX1 and RTCB. In terms of assembly, (Microbial infection) Interacts with influenza A virus (IAV) RNA polymerase subunits PA, PB1 and PB2, and nucleocapsid NP. Associates with IAV polymerase complexes both in the nucleus and cytosol. Associates with IAV ribonucleoproteins (vRNP) packaged in virions. Interacts with hepatitis C virus core protein p19. Widely expressed. Expressed at high level in heart and skeletal muscle. Expressed at intermediate level in liver, pancreas, fetal brain and fetal lung. Weakly expressed in adult brain, adult lung, placenta, fetal liver and fetal kidney. Overexpressed in many brain tumors.

It is found in the nucleus. The protein resides in the cytoplasm. Its subcellular location is the cytosol. The protein localises to the perinuclear region. It localises to the cytoskeleton. It is found in the microtubule organizing center. The protein resides in the centrosome. Its function is as follows. RNA-binding protein involved in modulation of mRNA transcription by Polymerase II. Component of the tRNA-splicing ligase complex and is required for tRNA ligation. May be required for RNA transport. Functionally, (Microbial infection) In case of infection by influenza virus A (IVA), is involved in viral replication. In Homo sapiens (Human), this protein is RNA transcription, translation and transport factor protein.